Here is a 158-residue protein sequence, read N- to C-terminus: Protein Smg homolog (158 aa).

This sequence belongs to the Smg family.

In Coxiella burnetii (strain RSA 331 / Henzerling II), this protein is Protein Smg homolog.